Here is a 513-residue protein sequence, read N- to C-terminus: ATP synthase subunit alpha (513 aa).

An ATP-binding site is contributed by 169–176 (GDRQTGKT).

It belongs to the ATPase alpha/beta chains family. F-type ATPases have 2 components, CF(1) - the catalytic core - and CF(0) - the membrane proton channel. CF(1) has five subunits: alpha(3), beta(3), gamma(1), delta(1), epsilon(1). CF(0) has three main subunits: a(1), b(2) and c(9-12). The alpha and beta chains form an alternating ring which encloses part of the gamma chain. CF(1) is attached to CF(0) by a central stalk formed by the gamma and epsilon chains, while a peripheral stalk is formed by the delta and b chains.

The protein resides in the cell inner membrane. It catalyses the reaction ATP + H2O + 4 H(+)(in) = ADP + phosphate + 5 H(+)(out). Produces ATP from ADP in the presence of a proton gradient across the membrane. The alpha chain is a regulatory subunit. The protein is ATP synthase subunit alpha of Bordetella petrii (strain ATCC BAA-461 / DSM 12804 / CCUG 43448).